The following is a 117-amino-acid chain: MDKKQARLKRAAKTRHVIRAMGANRLTVHRTPRHIYAQVISPDGGTVLAAASTLESAIRETLPVTGNKDAAIAVGRRIAEKALAVGISSVAFDRSGFKYHGRVKALAEAAREAGLQF.

This sequence belongs to the universal ribosomal protein uL18 family. In terms of assembly, part of the 50S ribosomal subunit; part of the 5S rRNA/L5/L18/L25 subcomplex. Contacts the 5S and 23S rRNAs.

This is one of the proteins that bind and probably mediate the attachment of the 5S RNA into the large ribosomal subunit, where it forms part of the central protuberance. This chain is Large ribosomal subunit protein uL18, found in Methylococcus capsulatus (strain ATCC 33009 / NCIMB 11132 / Bath).